The sequence spans 326 residues: Vitamin B12 import system permease protein BtuC (326 aa).

Transmembrane regions (helical) follow at residues 17 to 39 (LSLSLLVLLATLLSLCAGEQWIA), 59 to 81 (RTLAVLLVGAALALSGAVMQALF), 88 to 107 (PGLLGVSNGAGVGLIAAVLL), 111 to 133 (QLAGWALGLCAIAGALIITLILL), 146 to 168 (LLAGVALGIICSALMTWAIYFST), 188 to 205 (WQQSWLMIALIPVLIWIC), 242 to 264 (MVGVSVAMAGAIGFIGLVIPHIL), 274 to 296 (VLLPGCALAGAIALLLADVVARL), and 303 to 322 (LPIGVVTATLGAPVFIWLLL).

It belongs to the binding-protein-dependent transport system permease family. FecCD subfamily. As to quaternary structure, the complex is composed of two ATP-binding proteins (BtuD), two transmembrane proteins (BtuC) and a solute-binding protein (BtuF).

The protein resides in the cell inner membrane. Functionally, part of the ABC transporter complex BtuCDF involved in vitamin B12 import. Involved in the translocation of the substrate across the membrane. The chain is Vitamin B12 import system permease protein BtuC from Salmonella paratyphi A (strain ATCC 9150 / SARB42).